The primary structure comprises 448 residues: tRNA(Ile)-lysidine synthase (448 aa).

Residue 25–30 (SGGSDS) participates in ATP binding.

Belongs to the tRNA(Ile)-lysidine synthase family.

It localises to the cytoplasm. It carries out the reaction cytidine(34) in tRNA(Ile2) + L-lysine + ATP = lysidine(34) in tRNA(Ile2) + AMP + diphosphate + H(+). In terms of biological role, ligates lysine onto the cytidine present at position 34 of the AUA codon-specific tRNA(Ile) that contains the anticodon CAU, in an ATP-dependent manner. Cytidine is converted to lysidine, thus changing the amino acid specificity of the tRNA from methionine to isoleucine. The polypeptide is tRNA(Ile)-lysidine synthase (Brucella suis biovar 1 (strain 1330)).